We begin with the raw amino-acid sequence, 193 residues long: MDKKEYCYYCFEVVAATLEHRKVRDKWNAKSWTRSIPLFVKFASGKGHDKQLRGCIGTFRARPLVTNLTYFSKQAAFCDERFRPISLGELALLECQIDLLVDFEPIDDPLDWEVGIHGVSIKFTANGIRYSSTYLPSVAAEQRWDQEETLESLIHKAGYYGSIRSLQITATRYKSLEIGCTYEEYLHNLELLG.

The AMMECR1 domain maps to Met-1–Leu-189.

This is an uncharacterized protein from Schizosaccharomyces pombe (strain 972 / ATCC 24843) (Fission yeast).